The sequence spans 165 residues: MKVVQGDYRGEGLKIAVVVPRFNDLVTSKLLEGALDGLKRHGVSDENITVVRIPGSMEAIYTLKRLLDLGVHDAIIVLGAVIRGETYHFNVVANEIGKAVAQFNMTSDIPIVFGVLTTDTLEQALNRAGAKSGNKGFEAAMVAIEMANLRKRLRRDVFESDSNGR.

Residues phenylalanine 22, 56 to 58, and 80 to 82 each bind 5-amino-6-(D-ribitylamino)uracil; these read SME and AVI. 85–86 is a (2S)-2-hydroxy-3-oxobutyl phosphate binding site; it reads ET. The active-site Proton donor is histidine 88. Phenylalanine 113 is a 5-amino-6-(D-ribitylamino)uracil binding site. Arginine 127 lines the (2S)-2-hydroxy-3-oxobutyl phosphate pocket.

This sequence belongs to the DMRL synthase family.

It catalyses the reaction (2S)-2-hydroxy-3-oxobutyl phosphate + 5-amino-6-(D-ribitylamino)uracil = 6,7-dimethyl-8-(1-D-ribityl)lumazine + phosphate + 2 H2O + H(+). It functions in the pathway cofactor biosynthesis; riboflavin biosynthesis; riboflavin from 2-hydroxy-3-oxobutyl phosphate and 5-amino-6-(D-ribitylamino)uracil: step 1/2. Functionally, catalyzes the formation of 6,7-dimethyl-8-ribityllumazine by condensation of 5-amino-6-(D-ribitylamino)uracil with 3,4-dihydroxy-2-butanone 4-phosphate. This is the penultimate step in the biosynthesis of riboflavin. In Thermotoga sp. (strain RQ2), this protein is 6,7-dimethyl-8-ribityllumazine synthase.